Consider the following 74-residue polypeptide: Large ribosomal subunit protein uL29 (74 aa).

This sequence belongs to the universal ribosomal protein uL29 family.

The chain is Large ribosomal subunit protein uL29 from Nostoc sp. (strain PCC 7120 / SAG 25.82 / UTEX 2576).